The following is a 466-amino-acid chain: ATP synthase subunit beta (466 aa).

152-159 (GGAGVGKT) is an ATP binding site.

The protein belongs to the ATPase alpha/beta chains family. In terms of assembly, F-type ATPases have 2 components, CF(1) - the catalytic core - and CF(0) - the membrane proton channel. CF(1) has five subunits: alpha(3), beta(3), gamma(1), delta(1), epsilon(1). CF(0) has three main subunits: a(1), b(2) and c(9-12). The alpha and beta chains form an alternating ring which encloses part of the gamma chain. CF(1) is attached to CF(0) by a central stalk formed by the gamma and epsilon chains, while a peripheral stalk is formed by the delta and b chains.

Its subcellular location is the cell inner membrane. It catalyses the reaction ATP + H2O + 4 H(+)(in) = ADP + phosphate + 5 H(+)(out). Its function is as follows. Produces ATP from ADP in the presence of a proton gradient across the membrane. The catalytic sites are hosted primarily by the beta subunits. The chain is ATP synthase subunit beta from Helicobacter pylori (strain HPAG1).